Here is a 487-residue protein sequence, read N- to C-terminus: Glutamyl-tRNA(Gln) amidotransferase subunit A (487 aa).

Active-site charge relay system residues include Lys79 and Ser158. Ser182 functions as the Acyl-ester intermediate in the catalytic mechanism.

It belongs to the amidase family. GatA subfamily. As to quaternary structure, heterotrimer of A, B and C subunits.

The catalysed reaction is L-glutamyl-tRNA(Gln) + L-glutamine + ATP + H2O = L-glutaminyl-tRNA(Gln) + L-glutamate + ADP + phosphate + H(+). Allows the formation of correctly charged Gln-tRNA(Gln) through the transamidation of misacylated Glu-tRNA(Gln) in organisms which lack glutaminyl-tRNA synthetase. The reaction takes place in the presence of glutamine and ATP through an activated gamma-phospho-Glu-tRNA(Gln). This chain is Glutamyl-tRNA(Gln) amidotransferase subunit A, found in Ehrlichia chaffeensis (strain ATCC CRL-10679 / Arkansas).